Consider the following 233-residue polypeptide: Large ribosomal subunit protein uL3 (233 aa).

It belongs to the universal ribosomal protein uL3 family. As to quaternary structure, part of the 50S ribosomal subunit. Forms a cluster with proteins L14 and L19.

In terms of biological role, one of the primary rRNA binding proteins, it binds directly near the 3'-end of the 23S rRNA, where it nucleates assembly of the 50S subunit. The protein is Large ribosomal subunit protein uL3 of Ureaplasma parvum serovar 3 (strain ATCC 27815 / 27 / NCTC 11736).